Reading from the N-terminus, the 184-residue chain is Adenine phosphoribosyltransferase (184 aa).

It belongs to the purine/pyrimidine phosphoribosyltransferase family. Homodimer.

It localises to the cytoplasm. The catalysed reaction is AMP + diphosphate = 5-phospho-alpha-D-ribose 1-diphosphate + adenine. Its pathway is purine metabolism; AMP biosynthesis via salvage pathway; AMP from adenine: step 1/1. Functionally, catalyzes a salvage reaction resulting in the formation of AMP, that is energically less costly than de novo synthesis. This chain is Adenine phosphoribosyltransferase, found in Acidovorax sp. (strain JS42).